A 433-amino-acid chain; its full sequence is Enolase (433 aa).

A (2R)-2-phosphoglycerate-binding site is contributed by glutamine 164. The active-site Proton donor is the glutamate 206. The Mg(2+) site is built by aspartate 243, glutamate 289, and aspartate 316. The (2R)-2-phosphoglycerate site is built by lysine 341, arginine 370, serine 371, and lysine 392. Catalysis depends on lysine 341, which acts as the Proton acceptor.

It belongs to the enolase family. Requires Mg(2+) as cofactor.

The protein resides in the cytoplasm. The protein localises to the secreted. It is found in the cell surface. It carries out the reaction (2R)-2-phosphoglycerate = phosphoenolpyruvate + H2O. The protein operates within carbohydrate degradation; glycolysis; pyruvate from D-glyceraldehyde 3-phosphate: step 4/5. Its function is as follows. Catalyzes the reversible conversion of 2-phosphoglycerate (2-PG) into phosphoenolpyruvate (PEP). It is essential for the degradation of carbohydrates via glycolysis. This chain is Enolase, found in Borreliella burgdorferi (strain ZS7) (Borrelia burgdorferi).